Here is a 239-residue protein sequence, read N- to C-terminus: Small ribosomal subunit protein uS2 (239 aa).

It belongs to the universal ribosomal protein uS2 family.

This chain is Small ribosomal subunit protein uS2, found in Synechococcus sp. (strain CC9902).